The primary structure comprises 389 residues: Succinate--CoA ligase [ADP-forming] subunit beta (389 aa).

An ATP-grasp domain is found at 9-244 (KQLLAEYGIP…KTQEDPTEVI (236 aa)). ATP contacts are provided by residues Lys-46, 53–55 (GRG), Gly-102, and Glu-107. Residues Asn-199 and Asp-213 each coordinate Mg(2+). Residues Asn-264 and 321-323 (GIV) each bind substrate.

It belongs to the succinate/malate CoA ligase beta subunit family. Heterotetramer of two alpha and two beta subunits. It depends on Mg(2+) as a cofactor.

The catalysed reaction is succinate + ATP + CoA = succinyl-CoA + ADP + phosphate. The enzyme catalyses GTP + succinate + CoA = succinyl-CoA + GDP + phosphate. It functions in the pathway carbohydrate metabolism; tricarboxylic acid cycle; succinate from succinyl-CoA (ligase route): step 1/1. In terms of biological role, succinyl-CoA synthetase functions in the citric acid cycle (TCA), coupling the hydrolysis of succinyl-CoA to the synthesis of either ATP or GTP and thus represents the only step of substrate-level phosphorylation in the TCA. The beta subunit provides nucleotide specificity of the enzyme and binds the substrate succinate, while the binding sites for coenzyme A and phosphate are found in the alpha subunit. The chain is Succinate--CoA ligase [ADP-forming] subunit beta from Stenotrophomonas maltophilia (strain R551-3).